We begin with the raw amino-acid sequence, 808 residues long: Digalactosyldiacylglycerol synthase 1, chloroplastic (808 aa).

A disordered region spans residues 1–23; that stretch reads MVKETLIPPSSTSMTTGTSSSSS. A chloroplast-targeting transit peptide spans 1 to 58; that stretch reads MVKETLIPPSSTSMTTGTSSSSSLSMTLSSTNALSFLSKGWREVWDSADADLQLMRDR. A compositionally biased stretch (low complexity) spans 10-23; the sequence is SSTSMTTGTSSSSS.

It belongs to the glycosyltransferase group 1 family. Glycosyltransferase 4 subfamily.

It localises to the plastid. The protein resides in the chloroplast outer membrane. It catalyses the reaction a 1,2-diacyl-3-O-(beta-D-galactosyl)-sn-glycerol + UDP-alpha-D-galactose = a 1,2-diacyl-3-O-[alpha-D-galactosyl-(1-&gt;6)-beta-D-galactosyl]-sn-glycerol + UDP + H(+). Its function is as follows. Involved in the synthesis of diacylglycerol galactolipids that are specifically found in thylakoid membranes. Specific for alpha-glycosidic linkages. Responsible for the final assembly of galactolipids in photosynthetic membranes. Digalactosyldiacylglycerol (DGDG) provides stability to the photosystem I (PSI) complex, especially to the PsaA, PsaB, PsaC, PsaL and PsaH subunits. This is Digalactosyldiacylglycerol synthase 1, chloroplastic from Arabidopsis thaliana (Mouse-ear cress).